The following is a 208-amino-acid chain: Pectinesterase inhibitor 6 (208 aa).

Residues 1–30 (MTSSSSSPITFTLLLLLSLLVALNPNPSLA) form the signal peptide. Cysteine 53 and cysteine 62 are oxidised to a cystine. Asparagine 54 and asparagine 75 each carry an N-linked (GlcNAc...) asparagine glycan. A disulfide bridge links cysteine 118 with cysteine 165.

This sequence belongs to the PMEI family.

The protein resides in the secreted. Its subcellular location is the extracellular space. It localises to the apoplast. Pectin methylesterase (PME) inhibitor that targets PME from seeds and modulates PME activity and pectin methylesterification during seed germination. Promotes mucilage release by limiting methylesterification of homogalacturonan in seed coat epidermal cells. This chain is Pectinesterase inhibitor 6, found in Arabidopsis thaliana (Mouse-ear cress).